A 272-amino-acid polypeptide reads, in one-letter code: Shikimate dehydrogenase (NADP(+)) (272 aa).

Shikimate-binding positions include 14–16 (SLS) and T61. K65 serves as the catalytic Proton acceptor. D102 contacts shikimate. Residues 127–131 (GAGGA), 151–156 (NRTPSK), and L215 each bind NADP(+). Position 217 (Y217) interacts with shikimate. NADP(+) is bound at residue G239.

It belongs to the shikimate dehydrogenase family. As to quaternary structure, homodimer.

The catalysed reaction is shikimate + NADP(+) = 3-dehydroshikimate + NADPH + H(+). The protein operates within metabolic intermediate biosynthesis; chorismate biosynthesis; chorismate from D-erythrose 4-phosphate and phosphoenolpyruvate: step 4/7. Functionally, involved in the biosynthesis of the chorismate, which leads to the biosynthesis of aromatic amino acids. Catalyzes the reversible NADPH linked reduction of 3-dehydroshikimate (DHSA) to yield shikimate (SA). The polypeptide is Shikimate dehydrogenase (NADP(+)) (Coxiella burnetii (strain Dugway 5J108-111)).